Consider the following 250-residue polypeptide: Transcriptional activator protein ExpR (250 aa).

The region spanning 173–238 is the HTH luxR-type domain; that stretch reads KSQEADLFSQ…HAIRLGVEMN (66 aa). A DNA-binding region (H-T-H motif) is located at residues 197-216; that stretch reads YQEIALILGITTSTVKFHIG.

The protein belongs to the autoinducer-regulated transcriptional regulatory protein family.

Functionally, functions as an OHLL responsive transcriptional regulator that acts in virulence (soft rot disease) through the activation of genes for plant tissue macerating enzymes. The polypeptide is Transcriptional activator protein ExpR (expR) (Dickeya dadantii (strain 3937) (Erwinia chrysanthemi (strain 3937))).